A 383-amino-acid chain; its full sequence is F-box/kelch-repeat protein At4g19330 (383 aa).

The segment at 1–27 is disordered; it reads MAYLSFKSNMERTPRESNTPCPPPQPS. The F-box domain occupies 28 to 79; that stretch reads PSLFSSLPDDIVLNILARISTSYYQTLSLVSKTFRLLILSKELDMERSYLGT. Kelch repeat units lie at residues 147-192, 193-239, and 272-318; these read ETYE…VLDG, KLYV…NIQT, and STCE…SEIG.

Its function is as follows. Involved in seed germination. This chain is F-box/kelch-repeat protein At4g19330, found in Arabidopsis thaliana (Mouse-ear cress).